A 461-amino-acid chain; its full sequence is Integrator complex subunit 12 (461 aa).

The segment at 42-131 (GIDSSYRPTQ…PETRSSPITV (90 aa)) is disordered. Lys-68 participates in a covalent cross-link: Glycyl lysine isopeptide (Lys-Gly) (interchain with G-Cter in SUMO2). Positions 88–124 (TAEKIKKEAEKRPADKMKDVTEGIDVPKKPRLEKPET) are enriched in basic and acidic residues. Ser-127 is modified (phosphoserine). The segment at 158–214 (GLACVVCRQMTVASGNQLVECQECHNLYHQDCHKPQVTDKEVNDPRLVWYCARCTRQ) adopts a PHD-type zinc-finger fold. A Glycyl lysine isopeptide (Lys-Gly) (interchain with G-Cter in SUMO2) cross-link involves residue Lys-253. Positions 302 to 328 (AGPSTAKLNSAAQNSSGKPAASSSNQK) are enriched in polar residues. Positions 302-443 (AGPSTAKLNS…PTSQESQLNA (142 aa)) are disordered. 2 stretches are compositionally biased toward low complexity: residues 348–357 (GSGNSTSPSV) and 381–436 (VSKV…GPTS).

This sequence belongs to the Integrator subunit 12 family. In terms of assembly, component of the Integrator complex, composed of core subunits INTS1, INTS2, INTS3, INTS4, INTS5, INTS6, INTS7, INTS8, INTS9/RC74, INTS10, INTS11/CPSF3L, INTS12, INTS13, INTS14 and INTS15. The core complex associates with protein phosphatase 2A subunits PPP2CA and PPP2R1A, to form the Integrator-PP2A (INTAC) complex. Post-translationally, dephosphorylated at Ser-127 by the PNUTS-PP1 complex, promoting RNA polymerase II transcription pause-release.

The protein localises to the nucleus. Its function is as follows. Component of the integrator complex, a multiprotein complex that terminates RNA polymerase II (Pol II) transcription in the promoter-proximal region of genes. The integrator complex provides a quality checkpoint during transcription elongation by driving premature transcription termination of transcripts that are unfavorably configured for transcriptional elongation: the complex terminates transcription by (1) catalyzing dephosphorylation of the C-terminal domain (CTD) of Pol II subunit POLR2A/RPB1 and SUPT5H/SPT5, (2) degrading the exiting nascent RNA transcript via endonuclease activity and (3) promoting the release of Pol II from bound DNA. The integrator complex is also involved in terminating the synthesis of non-coding Pol II transcripts, such as enhancer RNAs (eRNAs), small nuclear RNAs (snRNAs), telomerase RNAs and long non-coding RNAs (lncRNAs). Mediates recruitment of cytoplasmic dynein to the nuclear envelope, probably as component of the integrator complex. The polypeptide is Integrator complex subunit 12 (Ints12) (Mus musculus (Mouse)).